The following is a 106-amino-acid chain: Cytochrome c (106 aa).

Cysteine 17, cysteine 20, and histidine 21 together coordinate heme c. At lysine 75 the chain carries N6,N6,N6-trimethyllysine. Methionine 83 contacts heme c.

The protein belongs to the cytochrome c family. In terms of processing, binds 1 heme c group covalently per subunit.

The protein resides in the mitochondrion intermembrane space. Electron carrier protein. The oxidized form of the cytochrome c heme group can accept an electron from the heme group of the cytochrome c1 subunit of cytochrome reductase. Cytochrome c then transfers this electron to the cytochrome oxidase complex, the final protein carrier in the mitochondrial electron-transport chain. The protein is Cytochrome c (CYC1) of Gibberella zeae (strain ATCC MYA-4620 / CBS 123657 / FGSC 9075 / NRRL 31084 / PH-1) (Wheat head blight fungus).